Reading from the N-terminus, the 142-residue chain is SsrA-binding protein (142 aa).

It belongs to the SmpB family.

The protein localises to the cytoplasm. Its function is as follows. Required for rescue of stalled ribosomes mediated by trans-translation. Binds to transfer-messenger RNA (tmRNA), required for stable association of tmRNA with ribosomes. tmRNA and SmpB together mimic tRNA shape, replacing the anticodon stem-loop with SmpB. tmRNA is encoded by the ssrA gene; the 2 termini fold to resemble tRNA(Ala) and it encodes a 'tag peptide', a short internal open reading frame. During trans-translation Ala-aminoacylated tmRNA acts like a tRNA, entering the A-site of stalled ribosomes, displacing the stalled mRNA. The ribosome then switches to translate the ORF on the tmRNA; the nascent peptide is terminated with the 'tag peptide' encoded by the tmRNA and targeted for degradation. The ribosome is freed to recommence translation, which seems to be the essential function of trans-translation. This chain is SsrA-binding protein, found in Mycoplasma mobile (strain ATCC 43663 / 163K / NCTC 11711) (Mesomycoplasma mobile).